A 611-amino-acid polypeptide reads, in one-letter code: Growth hormone receptor (611 aa).

A signal peptide spans 1 to 20; sequence MDLRHLLLTLVLVCANDSLS. A glycan (N-linked (GlcNAc...) asparagine) is linked at Asn-16. Residues 21–240 lie on the Extracellular side of the membrane; sequence ASDDVLRLPQ…EFVHCAEEIE (220 aa). The cysteines at positions 34 and 44 are disulfide-linked. Asn-53 is a glycosylation site (N-linked (GlcNAc...) asparagine). Cys-75 and Cys-86 are disulfide-bonded. The N-linked (GlcNAc...) asparagine glycan is linked to Asn-89. Cys-100 and Cys-114 form a disulfide bridge. A Fibronectin type-III domain is found at 125 to 228; the sequence is PPVHLNWTLL…EILYVSFSQA (104 aa). N-linked (GlcNAc...) asparagine glycans are attached at residues Asn-130, Asn-135, and Asn-174. The WSXWS motif signature appears at 214–218; the sequence is FGEFS. A helical transmembrane segment spans residues 241–264; it reads FPWFLVVIFGACGLAVTVILILLS. The Cytoplasmic segment spans residues 265 to 611; the sequence is KQSRLKMLIF…STDQLNKIMP (347 aa). Residues 270–355 form a required for JAK2 binding region; sequence KMLIFPPVPV…HLKSHSCLGA (86 aa). The Box 1 motif motif lies at 273-281; it reads IFPPVPVPK. The UbE motif signature appears at 316 to 325; the sequence is DLWVEFIELD. Residues 411–455 form a disordered region; it reads SLPSLANTDTQQPRMSTRPENSQPWPPFADSIDAASPSAHNQLSN. Positions 414-433 are enriched in polar residues; it reads SLANTDTQQPRMSTRPENSQ.

Belongs to the type I cytokine receptor family. Type 1 subfamily. The soluble form (GHBP) is produced by phorbol ester-promoted proteolytic cleavage at the cell surface (shedding) by ADAM17/TACE.

It is found in the cell membrane. The protein localises to the secreted. In terms of biological role, receptor for pituitary gland growth hormone (GH1) involved in regulating postnatal body growth. On ligand binding, couples to the JAK2/STAT5 pathway. Its function is as follows. The soluble form (GHBP) acts as a reservoir of growth hormone in plasma and may be a modulator/inhibitor of GH signaling. The protein is Growth hormone receptor (GHR) of Columba livia (Rock dove).